Reading from the N-terminus, the 738-residue chain is Conserved oligomeric Golgi complex subunit 4 (738 aa).

The protein belongs to the COG4 family. As to quaternary structure, component of the conserved oligomeric Golgi complex which is composed of eight different subunits and is required for normal Golgi morphology and localization. Interacts with COG2 and COG3.

Its subcellular location is the golgi apparatus membrane. Functionally, required for normal Golgi function. The protein is Conserved oligomeric Golgi complex subunit 4 of Arabidopsis thaliana (Mouse-ear cress).